Consider the following 362-residue polypeptide: Malate dehydrogenase (362 aa).

It belongs to the LDH2/MDH2 oxidoreductase family. As to quaternary structure, homodimer.

It is found in the cytoplasm. The catalysed reaction is (S)-malate + NAD(+) = oxaloacetate + NADH + H(+). In Pyrococcus abyssi (strain GE5 / Orsay), this protein is Malate dehydrogenase (mdh).